The chain runs to 567 residues: UPF0313 protein CTN_0332 (567 aa).

Residues 288–560 (KAIETVKFSI…NKMKENVLFK (273 aa)) form the Radical SAM core domain. Residues Cys303, Cys307, and Cys310 each coordinate [4Fe-4S] cluster.

This sequence belongs to the UPF0313 family. It depends on [4Fe-4S] cluster as a cofactor.

This is UPF0313 protein CTN_0332 from Thermotoga neapolitana (strain ATCC 49049 / DSM 4359 / NBRC 107923 / NS-E).